The following is a 2248-amino-acid chain: Zinc finger protein lin-13 (2248 aa).

Residues M1–P189 are disordered. The span at Q29 to P38 shows a compositional bias: polar residues. Residues K54 to E92 are compositionally biased toward basic and acidic residues. Positions E145–E155 are enriched in acidic residues. A Required for interaction with hpl-2 isoform a motif is present at residues P440 to V444. The C2H2-type 1 zinc finger occupies H503 to H525. The segment at K603–R665 is disordered. Residues K605–S620 are compositionally biased toward basic and acidic residues. 6 C2H2-type zinc fingers span residues V812 to H837, Y959 to H982, L1140 to H1162, F1556 to H1578, W1601 to H1623, and Y1657 to H1680. Over residues P1859–G1877 the composition is skewed to polar residues. The segment at P1859 to Q1900 is disordered.

Interacts (via PLVPV motif) with chromobox protein homolog hpl-2 (via chromo (shadow subtype) domain); the interaction is direct and influences localization of hpl-2 to nuclear foci. As to expression, in the L3 stage, expressed in syncytial hypodermal cell 7, body wall muscles, intestinal cells, distal tip cells and many neurons.

It is found in the nucleus. Functionally, involved in repression of vulval fate, possibly by a tumor suppressor protein Rb-mediated mechanism. May act in a common pathway with retinoblastoma-like protein homolog lin-35 and hpl-2 to influence the ER stress response in the intestine. Plays a role in recruiting chromobox protein homolog hpl-2 to specific chromatin sites. In Caenorhabditis elegans, this protein is Zinc finger protein lin-13 (lin-13).